A 233-amino-acid chain; its full sequence is Ribosomal RNA large subunit methyltransferase E (233 aa).

Residues G80, W82, D108, D124, and D148 each coordinate S-adenosyl-L-methionine. Catalysis depends on K188, which acts as the Proton acceptor.

Belongs to the class I-like SAM-binding methyltransferase superfamily. RNA methyltransferase RlmE family.

The protein localises to the cytoplasm. It catalyses the reaction uridine(2552) in 23S rRNA + S-adenosyl-L-methionine = 2'-O-methyluridine(2552) in 23S rRNA + S-adenosyl-L-homocysteine + H(+). In terms of biological role, specifically methylates the uridine in position 2552 of 23S rRNA at the 2'-O position of the ribose in the fully assembled 50S ribosomal subunit. The polypeptide is Ribosomal RNA large subunit methyltransferase E (Ruegeria pomeroyi (strain ATCC 700808 / DSM 15171 / DSS-3) (Silicibacter pomeroyi)).